Here is a 216-residue protein sequence, read N- to C-terminus: ATP-dependent dethiobiotin synthetase BioD (216 aa).

13-18 (EVGKTY) contributes to the ATP binding site. T17 contacts Mg(2+). K38 is a catalytic residue. Residue T42 coordinates substrate. ATP contacts are provided by residues D47 and 112–115 (EGVG). The Mg(2+) site is built by D47 and E112.

Belongs to the dethiobiotin synthetase family. As to quaternary structure, homodimer. Mg(2+) is required as a cofactor.

It localises to the cytoplasm. It carries out the reaction (7R,8S)-7,8-diammoniononanoate + CO2 + ATP = (4R,5S)-dethiobiotin + ADP + phosphate + 3 H(+). The protein operates within cofactor biosynthesis; biotin biosynthesis; biotin from 7,8-diaminononanoate: step 1/2. Its function is as follows. Catalyzes a mechanistically unusual reaction, the ATP-dependent insertion of CO2 between the N7 and N8 nitrogen atoms of 7,8-diaminopelargonic acid (DAPA, also called 7,8-diammoniononanoate) to form a ureido ring. The polypeptide is ATP-dependent dethiobiotin synthetase BioD (Endomicrobium trichonymphae).